A 159-amino-acid polypeptide reads, in one-letter code: Ribosomal RNA large subunit methyltransferase H (159 aa).

S-adenosyl-L-methionine-binding positions include Leu76, Gly108, and 127-132 (FGLLTL).

Belongs to the RNA methyltransferase RlmH family. In terms of assembly, homodimer.

It is found in the cytoplasm. It carries out the reaction pseudouridine(1915) in 23S rRNA + S-adenosyl-L-methionine = N(3)-methylpseudouridine(1915) in 23S rRNA + S-adenosyl-L-homocysteine + H(+). Functionally, specifically methylates the pseudouridine at position 1915 (m3Psi1915) in 23S rRNA. This chain is Ribosomal RNA large subunit methyltransferase H, found in Streptococcus pyogenes serotype M5 (strain Manfredo).